The following is a 276-amino-acid chain: Protein FAM151B (276 aa).

The protein belongs to the menorin family.

In terms of biological role, essential for survival of retinal photoreceptor cells. The sequence is that of Protein FAM151B (FAM151B) from Homo sapiens (Human).